The chain runs to 1169 residues: MLEGCILAVSSQSKSNAITNNSVPGAPNRVSFAKLREPLEVPGLLDVQTDSFEWLVGSDRWRQAAIDRGEENPVGGLEEVLAELSPIEDFSGSMSLSFSDPRFDEVKASVDECKDKDMTYAAPLFVTAEFINNNTGEIKSQTVFMGDFPMMTEKGTFIINGTERVVVSQLVRSPGVYFDETIDKSTEKTLHSVKVIPGRGAWLEFDVDKRDTVGVRIDRKRRQPVTVLLKALGWTNEQIVERFGFSEIMMGTLEKDTTSGTDEALLDIYRKLRPGEPPTKESAQTLLENLFFKEKRYDLARVGRYKVNKKLGLNAGKPITSSTLTEEDVVATIEYLVRLHEGQTSMTVPGGVEVPVEVDDIDHFGNRRLRTVGELIQNQIRVGLSRMERVVRERMTTQDVEAITPQTLINIRPVVAAIKEFFGTSQLSQFMDQNNPLSGLTHKRRLSALGPGGLSRERAGLEVRDVHPSHYGRMCPIETPEGPNIGLIGSLSVYARVNPFGFIETPYRKVENGVVTDQIDYLTADEEDRHVVAQANSPTDENGRFTEDRVMVRKKGGEVEFVSADQVDYMDVSPRQMVSVATAMIPFLEHDDANRALMGANMQRQAVPLVRSEAPLVGTGMELRAAIDAGDVVVADKTGVIEEVSADYITVMADDGTRQSYRLRKFARSNHGTCANQRPIVDAGQRVEAGQVIADGPCTQNGEMALGKNLLVAIMPWEGHNYEDAIILSNRLVEEDVLTSIHIEEHEIDARDTKLGAEEITRDIPNVSDEVLADLDERGIVRIGAEVRDGDILVGKVTPKGETELTPEERLLRAIFGEKAREVRDTSLKVPHGESGKVIGIRVFSREDDDELPAGVNELVRVYVAQKRKISDGDKLAGRHGNKGVIGKILPVEDMPFLPDGTPVDIILNTHGVPRRMNIGQILETHLGWVAKAGWNIDVAAGVPDWASKLPEELYSAPADSTVATPVFDGAQEGELAGLLGSTLPNRDGEVMVDADGKSTLFDGRSGEPFPYPVTVGYMYILKLHHLVDDKIHARSTGPYSMITQQPLGGKAQFGGQRFGEMECWAMQAYGAAYTLQELLTIKSDDTVGRVKVYEAIVKGENIPEPGIPESFKVLLKELQSLCLNVEVLSSDGAAIEMRDGDDEDLERAAANLGINLSRNESASVEDLA.

It belongs to the RNA polymerase beta chain family. In terms of assembly, the RNAP catalytic core consists of 2 alpha, 1 beta, 1 beta' and 1 omega subunit. When a sigma factor is associated with the core the holoenzyme is formed, which can initiate transcription. Interacts with RbpA, which partially restores Rif-inhibited transcription.

The catalysed reaction is RNA(n) + a ribonucleoside 5'-triphosphate = RNA(n+1) + diphosphate. DNA-dependent RNA polymerase catalyzes the transcription of DNA into RNA using the four ribonucleoside triphosphates as substrates. This subunit often mutates to generate rifampicin (Rif) resistance. Interaction with RbpA partially restores Rif-inhibited transcription; once the subunit is Rif-resistant however RbpA no longer stimulates transcription. In Mycolicibacterium smegmatis (strain ATCC 700084 / mc(2)155) (Mycobacterium smegmatis), this protein is DNA-directed RNA polymerase subunit beta.